A 140-amino-acid chain; its full sequence is Nucleoside diphosphate kinase (140 aa).

6 residues coordinate ATP: Lys11, Phe59, Arg87, Thr93, Arg104, and Asn114. The Pros-phosphohistidine intermediate role is filled by His117.

This sequence belongs to the NDK family. As to quaternary structure, homotetramer. It depends on Mg(2+) as a cofactor.

The protein localises to the cytoplasm. The catalysed reaction is a 2'-deoxyribonucleoside 5'-diphosphate + ATP = a 2'-deoxyribonucleoside 5'-triphosphate + ADP. It carries out the reaction a ribonucleoside 5'-diphosphate + ATP = a ribonucleoside 5'-triphosphate + ADP. Functionally, major role in the synthesis of nucleoside triphosphates other than ATP. The ATP gamma phosphate is transferred to the NDP beta phosphate via a ping-pong mechanism, using a phosphorylated active-site intermediate. This Beijerinckia indica subsp. indica (strain ATCC 9039 / DSM 1715 / NCIMB 8712) protein is Nucleoside diphosphate kinase.